A 2371-amino-acid polypeptide reads, in one-letter code: Reducing polyketide synthase DEP5 (2371 aa).

The Ketosynthase family 3 (KS3) domain occupies 47–477 (LEPIAVVGMG…GTNAHTIIES (431 aa)). Active-site for beta-ketoacyl synthase activity residues include C221, H358, and H399. The malonyl-CoA:ACP transacylase (MAT) domain stretch occupies residues 593–905 (VFTGQGAQWA…QYLPTLIRGS (313 aa)). Catalysis depends on S685, which acts as the For malonyltransferase activity. The interval 982–1120 (HDVLGQLTIG…GSIRINTSNK (139 aa)) is N-terminal hotdog fold. A dehydratase (DH) domain region spans residues 982 to 1158 (HDVLGQLTIG…FNYGPTFQDM (177 aa)). In terms of domain architecture, PKS/mFAS DH spans 982 to 1286 (HDVLGQLTIG…CTAYEAAIPQ (305 aa)). H1014 serves as the catalytic Proton acceptor; for dehydratase activity. A C-terminal hotdog fold region spans residues 1132–1286 (PQRASGKLWN…CTAYEAAIPQ (155 aa)). D1195 (proton donor; for dehydratase activity) is an active-site residue. The segment at 1656-1964 (GKVEAGKVVF…QSLSSTETVL (309 aa)) is enoyl reductase (ER) domain. The ketoreductase (KR) domain stretch occupies residues 1988–2163 (ATYLLVGCLG…KHACAVVLPM (176 aa)). The region spanning 2286-2364 (SLVRDHFISK…KFAELVCAAQ (79 aa)) is the Carrier domain. An O-(pantetheine 4'-phosphoryl)serine modification is found at S2323.

It functions in the pathway polyketide biosynthesis. Functionally, part of the gene cluster that mediates the biosynthesis of depudecin, a highly oxidized eleven-carbon linear polyketide that acts as a histone deacetylase (HDAC) inhibitor and makes a small contribution to pathogenesis. The reducing polyketide synthase DEP5 is the central enzyme in depudecin biosynthesis by yielding the backbone polyketide chain. The monooxygenases DEP2 and DEP4, as well as the uncharacterized protein DEP1, then act as tailoring enzymes to modify the intermediate polyketide chain into depudecin. The polypeptide is Reducing polyketide synthase DEP5 (Fusarium langsethiae).